A 131-amino-acid polypeptide reads, in one-letter code: uncharacterized protein (131 aa).

A run of 2 helical transmembrane segments spans residues 5–25 and 34–54; these read VQPI…YVLV and MAVT…YVMN. Positions 62–131 are disordered; sequence AAFKKAAKQS…KNKKKNRALF (70 aa). Composition is skewed to basic residues over residues 66–92 and 122–131; these read KAAK…RVSH and KNKKKNRALF.

It is found in the cell membrane. This is an uncharacterized protein from Bacillus subtilis (strain 168).